The sequence spans 398 residues: Glucose-1-phosphate adenylyltransferase (398 aa).

Residues Tyr-100, Gly-165, 180 to 181 (EK), and Ser-191 contribute to the alpha-D-glucose 1-phosphate site.

The protein belongs to the bacterial/plant glucose-1-phosphate adenylyltransferase family. Homotetramer.

The enzyme catalyses alpha-D-glucose 1-phosphate + ATP + H(+) = ADP-alpha-D-glucose + diphosphate. The protein operates within glycan biosynthesis; glycogen biosynthesis. Functionally, involved in the biosynthesis of ADP-glucose, a building block required for the elongation reactions to produce glycogen. Catalyzes the reaction between ATP and alpha-D-glucose 1-phosphate (G1P) to produce pyrophosphate and ADP-Glc. The polypeptide is Glucose-1-phosphate adenylyltransferase (Desulfitobacterium hafniense (strain Y51)).